A 1481-amino-acid chain; its full sequence is Cystic fibrosis transmembrane conductance regulator (1481 aa).

Residues 1–77 (MQRSPLEKAS…KLINALRRCF (77 aa)) lie on the Cytoplasmic side of the membrane. A helical transmembrane segment spans residues 78–98 (FWRFMFYGIILYLGEVTKAVQ). The 285-residue stretch at 81–365 (FMFYGIILYL…WAVQTWYDSL (285 aa)) folds into the ABC transmembrane type-1 1 domain. Residues 99–122 (PLLLGRIIASYDPDNEAERSIAIY) lie on the Extracellular side of the membrane. Residues 123-146 (LGIGLCLLFIVRTLLLHPAIFGLH) traverse the membrane as a helical segment. Topologically, residues 147–195 (HIGMQMRIAMFSLIYKKTLKLSSRVLDKISIGQLVSLLSNNLNKFDEGL) are cytoplasmic. The helical transmembrane segment at 196–216 (ALAHFVWIAPLQVTLLMGLLW) threads the bilayer. Topologically, residues 217–222 (DLLQAS) are extracellular. The chain crosses the membrane as a helical span at residues 223 to 243 (AFCGLAFLIVLALFQAGLGRM). The Cytoplasmic segment spans residues 244 to 298 (MMKYRDQRAGKINERLVITSEMIENIQSVKAYCWEEAMEKMIENLRQTELKLTRK). The helical transmembrane segment at 299–319 (AAYVRYFNSSAFFFSGFFVVF) threads the bilayer. Topologically, residues 320–339 (LSVLPYALIKGIVLRRIFTT) are extracellular. A helical transmembrane segment spans residues 340 to 358 (ISFCIVLRMAVTRQFPWAV). Topologically, residues 359–858 (QTWYDSLGAI…YLRYITIHKS (500 aa)) are cytoplasmic. Residues tryptophan 401, serine 433, 457–464 (GSTGAGKT), and glutamine 492 contribute to the ATP site. Residues 422 to 645 (NGDNSLFFSN…RPDFSSKLMG (224 aa)) enclose the ABC transporter 1 domain. The S-palmitoyl cysteine moiety is linked to residue cysteine 523. Residues serine 548 and serine 659 each carry the phosphoserine modification. A disordered R region region spans residues 653–831 (SAERRNSILT…EEINEDDLKE (179 aa)). Residue serine 669 is modified to Phosphoserine; by PKA. Serine 685 carries the post-translational modification Phosphoserine. A Glycyl lysine isopeptide (Lys-Gly) (interchain with G-Cter in ubiquitin) cross-link involves residue lysine 687. A phosphoserine mark is found at serine 699 and serine 711. A Phosphothreonine modification is found at threonine 716. Residues serine 736, serine 767, serine 790, serine 795, and serine 813 each carry the phosphoserine modification. The helical transmembrane segment at 859-879 (LIFVLIWCLVIFLAEVAASLV) threads the bilayer. One can recognise an ABC transmembrane type-1 2 domain in the interval 859 to 1155 (LIFVLIWCLV…AVNSSIDVDS (297 aa)). The Extracellular segment spans residues 880–918 (VLWLLKETPPQDSGNSTKGANNSYAVIITSTSSYYVFYI). N-linked (GlcNAc...) asparagine glycans are attached at residues asparagine 894 and asparagine 900. The chain crosses the membrane as a discontinuously helical span at residues 919-939 (YVGVADTLLALGLFRGLPLVH). Topologically, residues 940 to 990 (TLITVSKILHHKMLHSVLQAPMSTLNTLKAGGILNRFSKDMAILDDLLPLT) are cytoplasmic. A helical transmembrane segment spans residues 991-1011 (IFDFIQLLLIVIGAVAVVSVL). Residues 1012 to 1013 (QP) are Extracellular-facing. A helical transmembrane segment spans residues 1014 to 1034 (YIFLATVPVIAAFIILRAYFL). Residues 1035-1095 (HTSQQLKQLE…TANWFLYLST (61 aa)) lie on the Cytoplasmic side of the membrane. The helical transmembrane segment at 1096–1116 (LRWFQMRIEMIFVIFFIAVTF) threads the bilayer. Residues 1117–1130 (ISILTTGEGEGTVG) lie on the Extracellular side of the membrane. The helical transmembrane segment at 1131 to 1151 (IILTLAMNIMSTLQWAVNSSI) threads the bilayer. Topologically, residues 1152–1481 (DVDSLMRSVS…TEEEVQETRL (330 aa)) are cytoplasmic. The ABC transporter 2 domain maps to 1211–1444 (MTVKDLTAKY…KSLFQQAISS (234 aa)). Residues tyrosine 1220 and 1245–1252 (GRTGSGKS) contribute to the ATP site. Residues 1387-1481 (RTLKQAFADC…TEEEVQETRL (95 aa)) form an interaction with GORASP2 region. Cysteine 1396 carries the S-palmitoyl cysteine lipid modification. Phosphoserine occurs at positions 1445 and 1457. Residues 1449 to 1481 (KLFPHRNSSKHKSRSKIAALQEETEEEVQETRL) form a disordered region. Positions 1451-1463 (FPHRNSSKHKSRS) are enriched in basic residues. Residues 1470-1481 (EETEEEVQETRL) are compositionally biased toward acidic residues. A PDZ-binding motif is present at residues 1479–1481 (TRL).

It belongs to the ABC transporter superfamily. ABCC family. CFTR transporter (TC 3.A.1.202) subfamily. In terms of assembly, monomer; does not require oligomerization for channel activity. May form oligomers in the membrane. Interacts with SLC26A3, SLC26A6 and NHERF1. Interacts with SHANK2. Interacts with MYO6. Interacts (via C-terminus) with GOPC (via PDZ domain); this promotes CFTR internalization and thereby decreases channel activity. Interacts with SLC4A7 through NHERF1. Found in a complex with MYO5B and RAB11A. Interacts with ANO1. Interacts with SLC26A8. Interacts with AHCYL1; the interaction increases CFTR activity. Interacts with CSE1L. The core-glycosylated form interacts with GORASP2 (via PDZ GRASP-type 1 domain) in respone to ER stress. Interacts with MARCHF2; the interaction leads to CFTR ubiqtuitination and degradation. Interacts with ADGRG2. In terms of processing, N-glycosylated. Phosphorylated; cAMP treatment promotes phosphorylation and activates the channel. Dephosphorylation decreases the ATPase activity (in vitro). Phosphorylation at PKA sites activates the channel. Phosphorylation at PKC sites enhances the response to phosphorylation by PKA. Phosphorylated by AMPK; this inhibits channel activity. Post-translationally, ubiquitinated, leading to its degradation in the lysosome. Deubiquitination by USP10 in early endosomes enhances its endocytic recycling to the cell membrane. Ubiquitinated by RNF185 during ER stress. Ubiquitinated by MARCHF2.

It localises to the apical cell membrane. Its subcellular location is the early endosome membrane. The protein resides in the cell membrane. The protein localises to the recycling endosome membrane. It is found in the endoplasmic reticulum membrane. It localises to the nucleus. The catalysed reaction is ATP + H2O + closed Cl(-) channel = ADP + phosphate + open Cl(-) channel.. The enzyme catalyses chloride(in) = chloride(out). It carries out the reaction hydrogencarbonate(in) = hydrogencarbonate(out). It catalyses the reaction ATP + H2O = ADP + phosphate + H(+). Its function is as follows. Epithelial ion channel that plays an important role in the regulation of epithelial ion and water transport and fluid homeostasis. Mediates the transport of chloride ions across the cell membrane. Possesses an intrinsic ATPase activity and utilizes ATP to gate its channel; the passive flow of anions through the channel is gated by cycles of ATP binding and hydrolysis by the ATP-binding domains. The ion channel is also permeable to HCO(3)(-); selectivity depends on the extracellular chloride concentration. Exerts its function also by modulating the activity of other ion channels and transporters. Contributes to the regulation of the pH and the ion content of the epithelial fluid layer. Modulates the activity of the epithelial sodium channel (ENaC) complex, in part by regulating the cell surface expression of the ENaC complex. May regulate bicarbonate secretion and salvage in epithelial cells by regulating the transporter SLC4A7. Can inhibit the chloride channel activity of ANO1. Plays a role in the chloride and bicarbonate homeostasis during sperm epididymal maturation and capacitation. This is Cystic fibrosis transmembrane conductance regulator from Equus caballus (Horse).